A 197-amino-acid polypeptide reads, in one-letter code: Protein GrpE (197 aa).

Positions 1-12 are enriched in basic and acidic residues; sequence MTDSDGKTDKSG. The tract at residues 1–35 is disordered; sequence MTDSDGKTDKSGEPAAEVEPVVSKPYVMPDDPEDD.

Belongs to the GrpE family. In terms of assembly, homodimer.

The protein resides in the cytoplasm. In terms of biological role, participates actively in the response to hyperosmotic and heat shock by preventing the aggregation of stress-denatured proteins, in association with DnaK and GrpE. It is the nucleotide exchange factor for DnaK and may function as a thermosensor. Unfolded proteins bind initially to DnaJ; upon interaction with the DnaJ-bound protein, DnaK hydrolyzes its bound ATP, resulting in the formation of a stable complex. GrpE releases ADP from DnaK; ATP binding to DnaK triggers the release of the substrate protein, thus completing the reaction cycle. Several rounds of ATP-dependent interactions between DnaJ, DnaK and GrpE are required for fully efficient folding. The polypeptide is Protein GrpE (Nitrobacter winogradskyi (strain ATCC 25391 / DSM 10237 / CIP 104748 / NCIMB 11846 / Nb-255)).